We begin with the raw amino-acid sequence, 762 residues long: Coleoptile phototropism protein 1 (762 aa).

Residues 1–12 show a composition bias toward basic and acidic residues; it reads MWESESESHGGE. The tract at residues 1–29 is disordered; sequence MWESESESHGGERGLVPVGGGGGSGRHEA. Residues 51–128 form the BTB domain; sequence SDLLVKVGDV…SYGMAVDLTA (78 aa). Positions 227 to 238 are enriched in gly residues; it reads PAAIRGGGGSGG. Disordered stretches follow at residues 227-264, 460-495, 687-718, and 731-762; these read PAAI…RQAV, MAVA…ASAS, QVDG…AWSS, and GADA…NSIS. The NPH3 domain occupies 268–607; that stretch reads DWWFEDVSVL…VQVLFTEQVK (340 aa). A coiled-coil region spans residues 654-691; the sequence is AAAKKDINTLKFELESMKAKYLELQHEMDALQKQVDGR. Over residues 696–709 the composition is skewed to low complexity; the sequence is PSPAAAKIGKQQQQ. Gly residues predominate over residues 736-747; it reads AGGGVAPPGGGE. The segment covering 752–762 has biased composition (basic residues); sequence KGPRRWRNSIS.

Belongs to the NPH3 family.

Its pathway is protein modification; protein ubiquitination. In terms of biological role, may act as a substrate-specific adapter of an E3 ubiquitin-protein ligase complex (CUL3-RBX1-BTB) which mediates the ubiquitination and subsequent proteasomal degradation of target proteins. Plays a role as signal transduction component in coleoptile phototropism and lateral translocation of auxin. This is Coleoptile phototropism protein 1 (CPT1) from Oryza sativa subsp. japonica (Rice).